The primary structure comprises 273 residues: Polyamine aminopropyltransferase (273 aa).

Residues 5–238 form the PABS domain; the sequence is ENWFSERYSD…GFWSFTVASP (234 aa). Glutamine 34 is a binding site for S-methyl-5'-thioadenosine. Positions 65 and 90 each coordinate spermidine. S-methyl-5'-thioadenosine-binding positions include glutamate 109 and 140 to 141; that span reads DG. Aspartate 158 functions as the Proton acceptor in the catalytic mechanism. 158–161 lines the spermidine pocket; the sequence is DSTD. Residue proline 165 coordinates S-methyl-5'-thioadenosine.

This sequence belongs to the spermidine/spermine synthase family. Homodimer or homotetramer.

The protein localises to the cytoplasm. It carries out the reaction S-adenosyl 3-(methylsulfanyl)propylamine + putrescine = S-methyl-5'-thioadenosine + spermidine + H(+). It participates in amine and polyamine biosynthesis; spermidine biosynthesis; spermidine from putrescine: step 1/1. Its function is as follows. Catalyzes the irreversible transfer of a propylamine group from the amino donor S-adenosylmethioninamine (decarboxy-AdoMet) to putrescine (1,4-diaminobutane) to yield spermidine. In Thermoplasma acidophilum (strain ATCC 25905 / DSM 1728 / JCM 9062 / NBRC 15155 / AMRC-C165), this protein is Polyamine aminopropyltransferase.